A 293-amino-acid polypeptide reads, in one-letter code: Ribosomal protein L11 methyltransferase (293 aa).

Threonine 145, glycine 166, aspartate 188, and asparagine 230 together coordinate S-adenosyl-L-methionine.

It belongs to the methyltransferase superfamily. PrmA family.

Its subcellular location is the cytoplasm. It catalyses the reaction L-lysyl-[protein] + 3 S-adenosyl-L-methionine = N(6),N(6),N(6)-trimethyl-L-lysyl-[protein] + 3 S-adenosyl-L-homocysteine + 3 H(+). Its function is as follows. Methylates ribosomal protein L11. This Haemophilus ducreyi (strain 35000HP / ATCC 700724) protein is Ribosomal protein L11 methyltransferase.